The following is a 244-amino-acid chain: DNA repair protein RecO (244 aa).

It belongs to the RecO family.

In terms of biological role, involved in DNA repair and RecF pathway recombination. The chain is DNA repair protein RecO from Polynucleobacter necessarius subsp. necessarius (strain STIR1).